Reading from the N-terminus, the 586-residue chain is Homothallic switching endonuclease (586 aa).

The 156-residue stretch at 215–370 folds into the DOD-type homing endonuclease domain; that stretch reads MLGLWLGDST…IVHISRSLGM (156 aa).

Post-translationally, rapidly degraded via the ubiquitin-26S proteasome system through two ubiquitin-conjugating enzymes UBC2/RAD6 and UBC3/CDC34.

The protein resides in the nucleus. In terms of biological role, initiation of mating type interconversion. This protein is a site-specific endonuclease that cleaves a site in the mat locus on chromosome III. The double-strand break is followed by a unidirectional gene conversion event that replaces the information at the mat locus by information copied from either of the two homologous loci (HMR and HML) that reside at the extremity of the chromosome III. Endonuclease expression takes place in late G1 just before cells enter S phase. The sequence is that of Homothallic switching endonuclease (HO) from Saccharomyces cerevisiae (strain ATCC 204508 / S288c) (Baker's yeast).